The chain runs to 619 residues: Pentatricopeptide repeat-containing protein At1g68980, mitochondrial (619 aa).

The N-terminal 100 residues, 1–100 (MLRKTLTLIS…RAFVSTTYVI (100 aa)), are a transit peptide targeting the mitochondrion. PPR repeat units lie at residues 186–221 (DLVA…GVKP), 222–256 (DELS…GFAS), 257–292 (RRIL…GEAS), 295–329 (SEET…ESMS), 366–400 (GIGV…GLQL), 401–435 (DVET…RVAD), 436–466 (LKRC…VMED), 472–506 (KSHD…QYEP), 507–541 (NNQT…KAKL), and 542–576 (EHAL…KIFV).

Belongs to the PPR family. P subfamily.

It localises to the mitochondrion. The sequence is that of Pentatricopeptide repeat-containing protein At1g68980, mitochondrial from Arabidopsis thaliana (Mouse-ear cress).